The primary structure comprises 127 residues: Glycine cleavage system H protein (127 aa).

Positions 22–103 (EAYIGITDFA…AFANWIIKVE (82 aa)) constitute a Lipoyl-binding domain. Lys63 carries the N6-lipoyllysine modification.

It belongs to the GcvH family. In terms of assembly, the glycine cleavage system is composed of four proteins: P, T, L and H. The cofactor is (R)-lipoate.

Its function is as follows. The glycine cleavage system catalyzes the degradation of glycine. The H protein shuttles the methylamine group of glycine from the P protein to the T protein. The polypeptide is Glycine cleavage system H protein (Alkaliphilus oremlandii (strain OhILAs) (Clostridium oremlandii (strain OhILAs))).